Consider the following 147-residue polypeptide: Protein disulfide isomerase-like 5-1 (147 aa).

The N-terminal stretch at 1 to 29 (MDLAPGRRARLLVALALVVLVALAARSGA) is a signal peptide. Residues 30–137 (EVITLTEETF…LKNFVSDEAE (108 aa)) form the Thioredoxin domain. Residues cysteine 59 and cysteine 62 each act as nucleophile in the active site. Cysteine 59 and cysteine 62 form a disulfide bridge.

Belongs to the protein disulfide isomerase family.

Acts as a protein-folding catalyst that interacts with nascent polypeptides to catalyze the formation, isomerization, and reduction or oxidation of disulfide bonds. May play a role in storage protein biogenesis. The sequence is that of Protein disulfide isomerase-like 5-1 (PDIL5-1) from Oryza sativa subsp. japonica (Rice).